The primary structure comprises 316 residues: Ribosomal RNA small subunit methyltransferase H (316 aa).

S-adenosyl-L-methionine-binding positions include 35–37 (AGH), aspartate 55, phenylalanine 84, aspartate 105, and glutamine 112.

Belongs to the methyltransferase superfamily. RsmH family.

It localises to the cytoplasm. The catalysed reaction is cytidine(1402) in 16S rRNA + S-adenosyl-L-methionine = N(4)-methylcytidine(1402) in 16S rRNA + S-adenosyl-L-homocysteine + H(+). In terms of biological role, specifically methylates the N4 position of cytidine in position 1402 (C1402) of 16S rRNA. This is Ribosomal RNA small subunit methyltransferase H from Streptococcus mutans serotype c (strain ATCC 700610 / UA159).